The following is a 121-amino-acid chain: uncharacterized protein (121 aa).

Positions 12–24 (EEGGASAAAPDAS) are enriched in low complexity. Disordered regions lie at residues 12–63 (EEGG…RLEP) and 101–121 (KKLAQQPPRLEGSQKERSPVV). Residues 26–35 (KSKKGARPCF) show a composition bias toward basic residues. Polar residues predominate over residues 40–49 (QAGSCMTGRQ). A compositionally biased stretch (basic and acidic residues) spans 112-121 (GSQKERSPVV).

This is an uncharacterized protein from Homo sapiens (Human).